Reading from the N-terminus, the 430-residue chain is Adenylosuccinate synthetase (430 aa).

GTP contacts are provided by residues 12 to 18 (GDEGKGK) and 40 to 42 (GHT). Catalysis depends on D13, which acts as the Proton acceptor. Positions 13 and 40 each coordinate Mg(2+). IMP is bound by residues 13–16 (DEGK), 38–41 (NAGH), T130, R144, Q224, T239, and R303. H41 functions as the Proton donor in the catalytic mechanism. Residue 299 to 305 (TVTGRKR) coordinates substrate. Residues R305, 331-333 (KLD), and 413-415 (STS) each bind GTP.

It belongs to the adenylosuccinate synthetase family. As to quaternary structure, homodimer. Requires Mg(2+) as cofactor.

The protein resides in the cytoplasm. The enzyme catalyses IMP + L-aspartate + GTP = N(6)-(1,2-dicarboxyethyl)-AMP + GDP + phosphate + 2 H(+). The protein operates within purine metabolism; AMP biosynthesis via de novo pathway; AMP from IMP: step 1/2. In terms of biological role, plays an important role in the de novo pathway of purine nucleotide biosynthesis. Catalyzes the first committed step in the biosynthesis of AMP from IMP. This Cereibacter sphaeroides (strain ATCC 17025 / ATH 2.4.3) (Rhodobacter sphaeroides) protein is Adenylosuccinate synthetase.